Consider the following 77-residue polypeptide: Conotoxin ArMKLT2-0322 (77 aa).

Residues 1–22 form the signal peptide; sequence MKLTCVLIIAVLFLIVCQLNTA. The propeptide occupies 23–47; sequence DDSRDKQEYRAVRLRDAIRNSRGSR. 3 disulfide bridges follow: Cys-49–Cys-62, Cys-56–Cys-67, and Cys-61–Cys-74.

The protein belongs to the conotoxin O1 superfamily. Expressed by the venom duct.

It is found in the secreted. The polypeptide is Conotoxin ArMKLT2-0322 (Conus arenatus (Sand-dusted cone)).